Here is a 341-residue protein sequence, read N- to C-terminus: Phenylalanine--tRNA ligase alpha subunit (341 aa).

Mg(2+) is bound at residue E256.

It belongs to the class-II aminoacyl-tRNA synthetase family. Phe-tRNA synthetase alpha subunit type 1 subfamily. As to quaternary structure, tetramer of two alpha and two beta subunits. It depends on Mg(2+) as a cofactor.

The protein localises to the cytoplasm. It carries out the reaction tRNA(Phe) + L-phenylalanine + ATP = L-phenylalanyl-tRNA(Phe) + AMP + diphosphate + H(+). This chain is Phenylalanine--tRNA ligase alpha subunit, found in Chlamydia caviae (strain ATCC VR-813 / DSM 19441 / 03DC25 / GPIC) (Chlamydophila caviae).